Reading from the N-terminus, the 439-residue chain is Vacuolar zinc transporter COT1 (439 aa).

The Cytoplasmic portion of the chain corresponds to 1 to 9; it reads MKLGSKQVK. Residues 10 to 30 form a helical membrane-spanning segment; the sequence is IISLLLLDTVFFGIEITTGYL. At 31–33 the chain is on the vacuolar side; it reads SHS. A helical transmembrane segment spans residues 34 to 54; sequence LALIADSFHMLNDIISLVVAL. Over 55 to 76 the chain is Cytoplasmic; it reads WAVNVAKNRNPDSTYTYGWKRA. A helical membrane pass occupies residues 77-97; sequence EILGALINAVFLIALCVSILI. Residues 98 to 113 lie on the Vacuolar side of the membrane; it reads EALQRIIAPPVIENPK. Residues 114-134 traverse the membrane as a helical segment; the sequence is FVLYVGVAGLISNTVGLFLFH. Over 135 to 244 the chain is Cytoplasmic; sequence DNDQEHGHGH…RKRSLNMHGV (110 aa). 3 consecutive short sequence motifs (histidine repeat) follow at residues 140 to 144, 165 to 169, and 219 to 223; these read HGHGH, HTHAH, and SSHTI. The segment covering 207–230 has biased composition (polar residues); it reads PENASKTPSYSTSSHTIASGGNYT. A disordered region spans residues 207–231; that stretch reads PENASKTPSYSTSSHTIASGGNYTE. Residue Ser-225 is modified to Phosphoserine. The helical transmembrane segment at 245–265 threads the bilayer; that stretch reads FLHVLGDALGNIGVMLSAFFI. The Vacuolar segment spans residues 266 to 274; it reads WKTDYSWKY. Residues 275–295 traverse the membrane as a helical segment; it reads YTDPLVSLIITGIIFSSALPL. Topologically, residues 296 to 439 are cytoplasmic; it reads SCKASKILLQ…CNTADCLEDH (144 aa). Lys-301 participates in a covalent cross-link: Glycyl lysine isopeptide (Lys-Gly) (interchain with G-Cter in ubiquitin). Over residues 388–402 the composition is skewed to basic and acidic residues; the sequence is TSTERAGDSQGDHLQ. The disordered stretch occupies residues 388–408; that stretch reads TSTERAGDSQGDHLQNDPLSL.

The protein belongs to the cation diffusion facilitator (CDF) transporter (TC 2.A.4) family. SLC30A subfamily.

The protein localises to the vacuole membrane. The enzyme catalyses Zn(2+)(in) = Zn(2+)(out). Its function is as follows. Vacuolar transporter that regulates zinc homeostasis by mediating zinc transport and storage into the vacuole. Plays a role in resistance to zinc shock resulting from sudden influx of zinc into cytoplasm. May also participate in the regulation of cobalt levels under normal physiological conditions and may be important in the supply of metal that is required for metalloenzyme or cofactor synthesis. Involved in the resistance to cobalt and rhodium ions. This chain is Vacuolar zinc transporter COT1, found in Saccharomyces cerevisiae (strain ATCC 204508 / S288c) (Baker's yeast).